The primary structure comprises 316 residues: MQILLANPRGFCAGVDRAISIVENALTLYGAPIYVRHEVVHNRYVVDSLRKRGAIFIEQISEVPDGAILIFSAHGVSQAVRNEAKSRDLTVFDATCPLVTKVHMEVARASRRGEESILIGHAGHPEVEGTMGQYNNPQGGMYLVESPEDVLKLEVKNDARLSFMTQTTLSVDDTSDVIDALRARFPKIVGPRKDDICYATTNRQEAVRALAEQADVVLVVGSKNSSNSNRLAELAQRMGKAAYLIDDASDIQEAWVKDAACVGVTAGASAPDILVQNVITRLQELGGGEAVPLEGREENIVFEVPKELRVDVREVE.

Cysteine 12 is a binding site for [4Fe-4S] cluster. Residues histidine 41 and histidine 74 each coordinate (2E)-4-hydroxy-3-methylbut-2-enyl diphosphate. Dimethylallyl diphosphate is bound by residues histidine 41 and histidine 74. 2 residues coordinate isopentenyl diphosphate: histidine 41 and histidine 74. Cysteine 96 lines the [4Fe-4S] cluster pocket. Residue histidine 124 coordinates (2E)-4-hydroxy-3-methylbut-2-enyl diphosphate. Position 124 (histidine 124) interacts with dimethylallyl diphosphate. Residue histidine 124 participates in isopentenyl diphosphate binding. Residue glutamate 126 is the Proton donor of the active site. Threonine 167 is a binding site for (2E)-4-hydroxy-3-methylbut-2-enyl diphosphate. A [4Fe-4S] cluster-binding site is contributed by cysteine 197. Residues serine 225, serine 226, asparagine 227, and serine 269 each contribute to the (2E)-4-hydroxy-3-methylbut-2-enyl diphosphate site. The dimethylallyl diphosphate site is built by serine 225, serine 226, asparagine 227, and serine 269. Serine 225, serine 226, asparagine 227, and serine 269 together coordinate isopentenyl diphosphate.

This sequence belongs to the IspH family. Homodimer. [4Fe-4S] cluster serves as cofactor.

The catalysed reaction is isopentenyl diphosphate + 2 oxidized [2Fe-2S]-[ferredoxin] + H2O = (2E)-4-hydroxy-3-methylbut-2-enyl diphosphate + 2 reduced [2Fe-2S]-[ferredoxin] + 2 H(+). It carries out the reaction dimethylallyl diphosphate + 2 oxidized [2Fe-2S]-[ferredoxin] + H2O = (2E)-4-hydroxy-3-methylbut-2-enyl diphosphate + 2 reduced [2Fe-2S]-[ferredoxin] + 2 H(+). The protein operates within isoprenoid biosynthesis; dimethylallyl diphosphate biosynthesis; dimethylallyl diphosphate from (2E)-4-hydroxy-3-methylbutenyl diphosphate: step 1/1. It functions in the pathway isoprenoid biosynthesis; isopentenyl diphosphate biosynthesis via DXP pathway; isopentenyl diphosphate from 1-deoxy-D-xylulose 5-phosphate: step 6/6. Catalyzes the conversion of 1-hydroxy-2-methyl-2-(E)-butenyl 4-diphosphate (HMBPP) into a mixture of isopentenyl diphosphate (IPP) and dimethylallyl diphosphate (DMAPP). Acts in the terminal step of the DOXP/MEP pathway for isoprenoid precursor biosynthesis. In Klebsiella pneumoniae (strain 342), this protein is 4-hydroxy-3-methylbut-2-enyl diphosphate reductase.